The primary structure comprises 1513 residues: DNA topoisomerase 2-binding protein 1-A (1513 aa).

2 consecutive BRCT domains span residues 101 to 189 (VYNM…YSDV) and 194 to 283 (YLCP…MYKI). The segment at 289–308 (IKSVPDTSTPTGGNSKPNSR) is disordered. BRCT domains lie at 354–444 (APDD…IYFH), 530–621 (ADTS…SNAL), and 629–726 (EGST…SYLV). A compositionally biased stretch (polar residues) spans 789–799 (QHNKNPQTSGG). The disordered stretch occupies residues 789 to 809 (QHNKNPQTSGGESKVLQREPS). A Nuclear localization signal motif is present at residues 844-850 (PNQKNRT). The region spanning 892–984 (DNSKLLINVV…KRVPEALYPH (93 aa)) is the BRCT 6 domain. Disordered stretches follow at residues 1031 to 1053 (ETSDDQVKKAAGDGNPQNPSKDV) and 1086 to 1109 (SVGRAGFDNSPCTPEGARSTRNGR). Serine 1131 bears the Phosphoserine mark. 2 consecutive BRCT domains span residues 1253 to 1344 (SKEE…DYEW) and 1383 to 1480 (IAEG…NYCL). The Nuclear localization signal signature appears at 1508–1511 (KRSR).

It belongs to the TOPBP1 family. As to quaternary structure, interacts with cdc45. Interacts (via BRCT domains) with ticrr; interaction is cdk2-dependent. Interacts with atr in the presence of atrip. Interacts with recql4 (via N-terminus). Interacts with gmnc. Interacts with cip2a; forming the CIP2A-TOPBP1 complex. In terms of processing, phosphorylation at Ser-1131 is essential for phosphorylation of chek1, and thus for checkpoint regulation.

The protein localises to the nucleus. The protein resides in the chromosome. It localises to the cytoplasm. Its subcellular location is the cytoskeleton. It is found in the microtubule organizing center. The protein localises to the centrosome. The protein resides in the spindle pole. Its function is as follows. Scaffold protein that acts as a key protein-protein adapter in DNA replication and DNA repair. Composed of multiple BRCT domains, which specifically recognize and bind phosphorylated proteins, bringing proteins together into functional combinations. Required for DNA replication initiation but not for the formation of pre-replicative complexes or the elongation stages. Necessary for the loading of replication factors onto chromatin, including gmnc, cdc45, DNA polymerases and components of the GINS complex such as ginsl/sld5. Plays a central role in DNA repair by bridging proteins and promoting recruitment of proteins to DNA damage sites. Involved in double-strand break (DSB) repair via homologous recombination in S-phase by promoting the exchange between the DNA replication factor A (RPA) complex and RAD51. Involved in microhomology-mediated end-joining (MMEJ) DNA repair by promoting recruitment of polymerase theta (POLQ) to DNA damage sites during mitosis. In response to DNA damage, triggers the recruitment of checkpoint signaling proteins on chromatin, which activate the chek1 signaling pathway and block S-phase progression. Increases the kinase activity of atr to numerous substrates, and is required for the phosphorylation of Rad1. Together with cip2a, plays an essential role in the response to genome instability generated by the presence of acentric chromosome fragments derived from shattered chromosomes within micronuclei. The CIP2A-TOPBP1 complex tethers chromosome fragments during mitosis to ensure clustered segregation of the fragments to a single daughter cell nucleus, facilitating re-ligation with limited chromosome scattering and loss. The sequence is that of DNA topoisomerase 2-binding protein 1-A (topbp1-A) from Xenopus laevis (African clawed frog).